The following is a 364-amino-acid chain: MASIFPSRRVRRTPFSAGVEAAGVKGYTVYNHMLLPTVFDSLQADCAHLKEHVQVWDVACERQVSIQGPDALRLMKLISPRDMDRMADDQCYYVPTVDHRGGMLNDPVAVKLAADHYWLSLADGDLLQFGLGIAIARGFDVEIVEPDVSPLAVQGPRADDLMARVFGEAVRDIRFFRYKRLAFQGVELVVARSGWSKQGGFEIYVEGSELGMPLWNALFAAGADLNVRAGCPNNIERVESGLLSYGNDMTRENTPYECGLGKFCNSPEDYIGKAALAEQAKNGPARQIRALVIGGEIPPCQDAWPLLADGRQVGQVGSAIHSPEFGVNVAIGMVDRSHWAPGTGMEVETPDGMRPVTVREGFWR.

This sequence belongs to the GcvT family. DmdA subfamily.

The enzyme catalyses S,S-dimethyl-beta-propiothetin + (6S)-5,6,7,8-tetrahydrofolate = 3-(methylsulfanyl)propanoate + (6S)-5-methyl-5,6,7,8-tetrahydrofolate + H(+). Its function is as follows. Involved in the assimilation of dimethylsulphoniopropionate (DMSP), an important compound in the fixation of carbon in marine phytoplankton, by mediating demethylation of dimethylsulfoniopropionate (DMSP) to methyl-mercaptopropionate (MMPA). The intracellular concentration of DMSP is estimated to be 70 mM. The sequence is that of Dimethylsulfoniopropionate demethylase DmdA from Ruegeria pomeroyi (strain ATCC 700808 / DSM 15171 / DSS-3) (Silicibacter pomeroyi).